The chain runs to 525 residues: Plant UBX domain-containing protein 13 (525 aa).

A UBA-like domain is found at 2–44 (ATPTQEAIDTFMTITGSSNAVAVRKLEEYRGNLNRAVNAYFTH). Disordered stretches follow at residues 67 to 96 (RTTDPFPLRDPNFGRSLFDNDPVMSRPPFV), 150 to 172 (DDDNQSAPTGQSRHAVPVGSAEN), and 194 to 328 (METG…EEHD). A compositionally biased stretch (basic and acidic residues) spans 209-229 (AEREVLRSEGWKASSSEREAS). Positions 254 to 274 (SEDDDDDDDDDPDYVEEEEEP) are enriched in acidic residues. A Phosphoserine modification is found at serine 362. The stretch at 380–436 (LASLEADRVKAEARRLEEEAARVEAIEEAKRKEEEARRKVEEEQELERQLVSKEASL) forms a coiled coil. Residues 408 to 430 (AKRKEEEARRKVEEEQELERQLV) show a composition bias toward basic and acidic residues. The disordered stretch occupies residues 408–446 (AKRKEEEARRKVEEEQELERQLVSKEASLPQEPPAGEEN). Residues 443–521 (GEENAITLQV…GLTSKQEALF (79 aa)) form the UBX domain.

This chain is Plant UBX domain-containing protein 13, found in Arabidopsis thaliana (Mouse-ear cress).